The primary structure comprises 213 residues: NAD(P)H-hydrate epimerase (213 aa).

Residues 8 to 210 (MYNIEENGHA…KIGIPPEAEK (203 aa)) enclose the YjeF N-terminal domain. A (6S)-NADPHX-binding site is contributed by 55 to 59 (NNGGD). K(+)-binding residues include N56 and D122. Residues 126–132 (GTGITGE), Y137, and D155 each bind (6S)-NADPHX. A K(+)-binding site is contributed by S158.

This sequence belongs to the NnrE/AIBP family. K(+) serves as cofactor.

It catalyses the reaction (6R)-NADHX = (6S)-NADHX. The enzyme catalyses (6R)-NADPHX = (6S)-NADPHX. Its function is as follows. Catalyzes the epimerization of the S- and R-forms of NAD(P)HX, a damaged form of NAD(P)H that is a result of enzymatic or heat-dependent hydration. This is a prerequisite for the S-specific NAD(P)H-hydrate dehydratase to allow the repair of both epimers of NAD(P)HX. The sequence is that of NAD(P)H-hydrate epimerase from Cenarchaeum symbiosum (strain A).